A 66-amino-acid chain; its full sequence is Large ribosomal subunit protein bL33c (66 aa).

The protein belongs to the bacterial ribosomal protein bL33 family.

Its subcellular location is the plastid. The protein localises to the chloroplast. This Arabis hirsuta (Hairy rock-cress) protein is Large ribosomal subunit protein bL33c.